A 384-amino-acid chain; its full sequence is S-adenosylmethionine synthase (384 aa).

Histidine 15 lines the ATP pocket. Aspartate 17 contributes to the Mg(2+) binding site. A K(+)-binding site is contributed by glutamate 43. L-methionine is bound by residues glutamate 56 and glutamine 99. The tract at residues 99 to 109 (QSPDINQGVDR) is flexible loop. ATP contacts are provided by residues 164 to 166 (DAK), 231 to 232 (RF), aspartate 240, 246 to 247 (RK), alanine 263, and lysine 267. Aspartate 240 provides a ligand contact to L-methionine. Lysine 271 is an L-methionine binding site.

This sequence belongs to the AdoMet synthase family. Homotetramer; dimer of dimers. Mg(2+) is required as a cofactor. Requires K(+) as cofactor.

The protein localises to the cytoplasm. The enzyme catalyses L-methionine + ATP + H2O = S-adenosyl-L-methionine + phosphate + diphosphate. The protein operates within amino-acid biosynthesis; S-adenosyl-L-methionine biosynthesis; S-adenosyl-L-methionine from L-methionine: step 1/1. Functionally, catalyzes the formation of S-adenosylmethionine (AdoMet) from methionine and ATP. The overall synthetic reaction is composed of two sequential steps, AdoMet formation and the subsequent tripolyphosphate hydrolysis which occurs prior to release of AdoMet from the enzyme. The chain is S-adenosylmethionine synthase from Shewanella halifaxensis (strain HAW-EB4).